The primary structure comprises 491 residues: UDP-glycosyltransferase 73C1 (491 aa).

Residues serine 292, 352–354, 369–377, and 391–394 each bind UDP-alpha-D-glucose; these read SPQ, HCGWNSTLE, and FGDQ.

Belongs to the UDP-glycosyltransferase family.

In terms of biological role, involved in the O-glucosylation of trans-zeatin and dihydrozeatin. Also active in vitro on cis-zeatin, dihydrozeatin-9-N-Glc, and olomoucine. Can detoxify the explosive 2,4,6-trinitrotoluene in plant by forming O- or C-glucose conjugates. In Arabidopsis thaliana (Mouse-ear cress), this protein is UDP-glycosyltransferase 73C1 (UGT73C1).